The following is a 549-amino-acid chain: Glucose-6-phosphate isomerase (549 aa).

Glu353 (proton donor) is an active-site residue. Active-site residues include His384 and Lys512.

The protein belongs to the GPI family.

The protein resides in the cytoplasm. The catalysed reaction is alpha-D-glucose 6-phosphate = beta-D-fructose 6-phosphate. Its pathway is carbohydrate biosynthesis; gluconeogenesis. The protein operates within carbohydrate degradation; glycolysis; D-glyceraldehyde 3-phosphate and glycerone phosphate from D-glucose: step 2/4. Catalyzes the reversible isomerization of glucose-6-phosphate to fructose-6-phosphate. The protein is Glucose-6-phosphate isomerase of Alteromonas mediterranea (strain DSM 17117 / CIP 110805 / LMG 28347 / Deep ecotype).